We begin with the raw amino-acid sequence, 153 residues long: Lipoprotein signal peptidase (153 aa).

2 consecutive transmembrane segments (helical) span residues 52 to 72 and 81 to 101; these read ILAGQMWFFYVITIAVIIGIV and GQMLLGISLGLMLGGAAGNFI. Catalysis depends on residues Asp-111 and Asp-129. The helical transmembrane segment at 124–144 threads the bilayer; sequence IFNIADSSLCVGVILLFIHML.

The protein belongs to the peptidase A8 family.

It is found in the cell membrane. The catalysed reaction is Release of signal peptides from bacterial membrane prolipoproteins. Hydrolyzes -Xaa-Yaa-Zaa-|-(S,diacylglyceryl)Cys-, in which Xaa is hydrophobic (preferably Leu), and Yaa (Ala or Ser) and Zaa (Gly or Ala) have small, neutral side chains.. It functions in the pathway protein modification; lipoprotein biosynthesis (signal peptide cleavage). Its function is as follows. This protein specifically catalyzes the removal of signal peptides from prolipoproteins. The sequence is that of Lipoprotein signal peptidase from Bacillus velezensis (strain DSM 23117 / BGSC 10A6 / LMG 26770 / FZB42) (Bacillus amyloliquefaciens subsp. plantarum).